The chain runs to 338 residues: Holliday junction branch migration complex subunit RuvB (338 aa).

The segment at 1-22 is disordered; that stretch reads MVDDERVVSPETADDHEDSVEK. The interval 4–185 is large ATPase domain (RuvB-L); that stretch reads DERVVSPETA…FGIVEHMAYY (182 aa). ATP is bound by residues leucine 24, arginine 25, glycine 66, lysine 69, threonine 70, threonine 71, 132–134, arginine 175, tyrosine 185, and arginine 222; that span reads EDF. Threonine 70 serves as a coordination point for Mg(2+). Residues 186–257 are small ATPAse domain (RuvB-S); that stretch reads ETTDLQEIVL…IVDHALDLLR (72 aa). Residues 260–338 form a head domain (RuvB-H) region; it reads SAGLDATDIK…HLGRTMPDNN (79 aa). The DNA site is built by arginine 315 and arginine 320.

This sequence belongs to the RuvB family. As to quaternary structure, homohexamer. Forms an RuvA(8)-RuvB(12)-Holliday junction (HJ) complex. HJ DNA is sandwiched between 2 RuvA tetramers; dsDNA enters through RuvA and exits via RuvB. An RuvB hexamer assembles on each DNA strand where it exits the tetramer. Each RuvB hexamer is contacted by two RuvA subunits (via domain III) on 2 adjacent RuvB subunits; this complex drives branch migration. In the full resolvosome a probable DNA-RuvA(4)-RuvB(12)-RuvC(2) complex forms which resolves the HJ.

The protein resides in the cytoplasm. The catalysed reaction is ATP + H2O = ADP + phosphate + H(+). In terms of biological role, the RuvA-RuvB-RuvC complex processes Holliday junction (HJ) DNA during genetic recombination and DNA repair, while the RuvA-RuvB complex plays an important role in the rescue of blocked DNA replication forks via replication fork reversal (RFR). RuvA specifically binds to HJ cruciform DNA, conferring on it an open structure. The RuvB hexamer acts as an ATP-dependent pump, pulling dsDNA into and through the RuvAB complex. RuvB forms 2 homohexamers on either side of HJ DNA bound by 1 or 2 RuvA tetramers; 4 subunits per hexamer contact DNA at a time. Coordinated motions by a converter formed by DNA-disengaged RuvB subunits stimulates ATP hydrolysis and nucleotide exchange. Immobilization of the converter enables RuvB to convert the ATP-contained energy into a lever motion, pulling 2 nucleotides of DNA out of the RuvA tetramer per ATP hydrolyzed, thus driving DNA branch migration. The RuvB motors rotate together with the DNA substrate, which together with the progressing nucleotide cycle form the mechanistic basis for DNA recombination by continuous HJ branch migration. Branch migration allows RuvC to scan DNA until it finds its consensus sequence, where it cleaves and resolves cruciform DNA. The sequence is that of Holliday junction branch migration complex subunit RuvB from Levilactobacillus brevis (strain ATCC 367 / BCRC 12310 / CIP 105137 / JCM 1170 / LMG 11437 / NCIMB 947 / NCTC 947) (Lactobacillus brevis).